Reading from the N-terminus, the 111-residue chain is Putative single-stranded DNA-binding protein ycf41 (111 aa).

One can recognise an SSB domain in the interval 1-98 (MNKCNLLVQI…FSTSRIFKYK (98 aa)).

The protein resides in the plastid. It localises to the chloroplast. The protein is Putative single-stranded DNA-binding protein ycf41 (ycf41) of Porphyra purpurea (Red seaweed).